The primary structure comprises 193 residues: Auxin-responsive protein IAA23 (193 aa).

Over residues 1–12 (MSTSSGADSSPP) the composition is skewed to polar residues. Positions 1–66 (MSTSSGADSS…SPKARAVGWP (66 aa)) are disordered. Residues 21–36 (TALTLALPGSSSSSSS) are compositionally biased toward low complexity. Residues 23–27 (LTLAL) carry the EAR-like (transcriptional repression) motif. Residues 39–53 (DPERKRAAHADHADA) are compositionally biased toward basic and acidic residues. A PB1 domain is found at 83–191 (AKLVKVAVDG…EAVNLSPRRS (109 aa)).

The protein belongs to the Aux/IAA family. As to quaternary structure, homodimers and heterodimers. As to expression, highly expressed in roots. Expressed in seedlings.

It localises to the nucleus. Its function is as follows. Aux/IAA proteins are short-lived transcriptional factors that function as repressors of early auxin response genes at low auxin concentrations. This Oryza sativa subsp. japonica (Rice) protein is Auxin-responsive protein IAA23 (IAA23).